The primary structure comprises 156 residues: Small ribosomal subunit protein uS7 (156 aa).

The protein belongs to the universal ribosomal protein uS7 family. As to quaternary structure, part of the 30S ribosomal subunit. Contacts proteins S9 and S11.

Functionally, one of the primary rRNA binding proteins, it binds directly to 16S rRNA where it nucleates assembly of the head domain of the 30S subunit. Is located at the subunit interface close to the decoding center, probably blocks exit of the E-site tRNA. This chain is Small ribosomal subunit protein uS7, found in Onion yellows phytoplasma (strain OY-M).